Reading from the N-terminus, the 253-residue chain is uncharacterized protein (253 aa).

Polar residues predominate over residues 175 to 184; the sequence is NPTQTSPGKP. Residues 175–253 form a disordered region; it reads NPTQTSPGKP…ATENEDRLPS (79 aa). The residue at position 180 (Ser180) is a Phosphoserine. 2 stretches are compositionally biased toward low complexity: residues 185–196 and 203–214; these read STSESSQTDTST and TPTTTRASSYTT. Over residues 215-242 the composition is skewed to polar residues; it reads LVSTSNQVSNEAEASAVETSANQAQNTE.

The protein belongs to the TRAPP small subunits family. BET3 subfamily.

This is an uncharacterized protein from Schizosaccharomyces pombe (strain 972 / ATCC 24843) (Fission yeast).